Reading from the N-terminus, the 428-residue chain is Serine--tRNA ligase (428 aa).

Residue 231 to 233 (TAE) coordinates L-serine. Residues 262 to 264 (RRE) and V278 each bind ATP. E285 lines the L-serine pocket. 349-352 (EVSS) lines the ATP pocket. An L-serine-binding site is contributed by S384.

The protein belongs to the class-II aminoacyl-tRNA synthetase family. Type-1 seryl-tRNA synthetase subfamily. In terms of assembly, homodimer. The tRNA molecule binds across the dimer.

The protein localises to the cytoplasm. It carries out the reaction tRNA(Ser) + L-serine + ATP = L-seryl-tRNA(Ser) + AMP + diphosphate + H(+). The catalysed reaction is tRNA(Sec) + L-serine + ATP = L-seryl-tRNA(Sec) + AMP + diphosphate + H(+). It functions in the pathway aminoacyl-tRNA biosynthesis; selenocysteinyl-tRNA(Sec) biosynthesis; L-seryl-tRNA(Sec) from L-serine and tRNA(Sec): step 1/1. Its function is as follows. Catalyzes the attachment of serine to tRNA(Ser). Is also able to aminoacylate tRNA(Sec) with serine, to form the misacylated tRNA L-seryl-tRNA(Sec), which will be further converted into selenocysteinyl-tRNA(Sec). This is Serine--tRNA ligase from Chlamydia trachomatis serovar A (strain ATCC VR-571B / DSM 19440 / HAR-13).